A 165-amino-acid polypeptide reads, in one-letter code: Protein SprT (165 aa).

Residues 22–163 enclose the SprT-like domain; the sequence is LAQANLKLGC…RCVHCGEQLV (142 aa). His-78 lines the Zn(2+) pocket. The active site involves Glu-79. His-82 is a Zn(2+) binding site.

The protein belongs to the SprT family. Zn(2+) serves as cofactor.

The protein localises to the cytoplasm. The polypeptide is Protein SprT (Shigella dysenteriae serotype 1 (strain Sd197)).